We begin with the raw amino-acid sequence, 601 residues long: ATP-dependent lipid A-core flippase (601 aa).

The 301-residue stretch at 28–328 folds into the ABC transmembrane type-1 domain; it reads LLSVCGLIVY…LTRVNAEFQR (301 aa). The next 6 helical transmembrane spans lie at 32-52, 81-101, 160-180, 183-203, 267-287, and 296-316; these read CGLI…GPFI, VLLM…FANF, ALIS…LMFY, WKLS…ITIV, AVSQ…VLYA, and DLTA…LQPI. The ABC transporter domain maps to 360-597; that stretch reads LRFDNVSFSY…GGMYAKLYQM (238 aa). 394 to 401 lines the ATP pocket; that stretch reads GRSGSGKS.

The protein belongs to the ABC transporter superfamily. Lipid exporter (TC 3.A.1.106) family. Homodimer.

The protein localises to the cell inner membrane. It carries out the reaction ATP + H2O + lipid A-core oligosaccharideSide 1 = ADP + phosphate + lipid A-core oligosaccharideSide 2.. In terms of biological role, involved in lipopolysaccharide (LPS) biosynthesis. Translocates lipid A-core from the inner to the outer leaflet of the inner membrane. Transmembrane domains (TMD) form a pore in the inner membrane and the ATP-binding domain (NBD) is responsible for energy generation. The sequence is that of ATP-dependent lipid A-core flippase from Shewanella sp. (strain MR-4).